We begin with the raw amino-acid sequence, 170 residues long: uncharacterized protein (170 aa).

Residues L7–L27 traverse the membrane as a helical segment.

It localises to the membrane. This is an uncharacterized protein from Haemophilus influenzae (strain ATCC 51907 / DSM 11121 / KW20 / Rd).